The primary structure comprises 287 residues: 2-dehydro-3-deoxyphosphooctonate aldolase (287 aa).

This sequence belongs to the KdsA family.

The protein resides in the cytoplasm. It carries out the reaction D-arabinose 5-phosphate + phosphoenolpyruvate + H2O = 3-deoxy-alpha-D-manno-2-octulosonate-8-phosphate + phosphate. The protein operates within carbohydrate biosynthesis; 3-deoxy-D-manno-octulosonate biosynthesis; 3-deoxy-D-manno-octulosonate from D-ribulose 5-phosphate: step 2/3. It functions in the pathway bacterial outer membrane biogenesis; lipopolysaccharide biosynthesis. This chain is 2-dehydro-3-deoxyphosphooctonate aldolase, found in Nitrobacter winogradskyi (strain ATCC 25391 / DSM 10237 / CIP 104748 / NCIMB 11846 / Nb-255).